A 227-amino-acid polypeptide reads, in one-letter code: Ribosomal RNA small subunit methyltransferase G (227 aa).

S-adenosyl-L-methionine contacts are provided by residues Gly69, Phe74, 119-120, and Arg134; that span reads VE.

It belongs to the methyltransferase superfamily. RNA methyltransferase RsmG family.

The protein resides in the cytoplasm. Its function is as follows. Specifically methylates the N7 position of a guanine in 16S rRNA. In Mycoplasmopsis pulmonis (strain UAB CTIP) (Mycoplasma pulmonis), this protein is Ribosomal RNA small subunit methyltransferase G.